The primary structure comprises 502 residues: Bone morphogenetic protein receptor type-1B (502 aa).

Over residues 1-10 (MPLLSSSKLS) the composition is skewed to polar residues. Positions 1-13 (MPLLSSSKLSMES) are cleaved as a signal peptide. The interval 1–27 (MPLLSSSKLSMESRKEDSEGTAPAPPQ) is disordered. Over 14 to 126 (RKEDSEGTAP…DFAEGNIHHK (113 aa)) the chain is Extracellular. Intrachain disulfides connect cysteine 32–cysteine 53, cysteine 34–cysteine 38, cysteine 47–cysteine 71, cysteine 81–cysteine 95, and cysteine 96–cysteine 102. Asparagine 44 is a glycosylation site (N-linked (GlcNAc...) asparagine). A helical transmembrane segment spans residues 127–148 (ALLISVTVCSILLVLIIIFCYF). Residues 149–502 (RYKRQEARPR…KMSESQDIKL (354 aa)) lie on the Cytoplasmic side of the membrane. One can recognise a GS domain in the interval 174-203 (ESLKDLIEQSQSSGSGSGLPLLVQRTIAKQ). Residues 204-494 (IQMVKQIGKG…LRVKKTLAKM (291 aa)) form the Protein kinase domain. Residues 210-218 (IGKGRYGEV) and lysine 231 contribute to the ATP site. Residue aspartate 332 is the Proton acceptor of the active site.

It belongs to the protein kinase superfamily. TKL Ser/Thr protein kinase family. TGFB receptor subfamily. The cofactor is Mg(2+). It depends on Mn(2+) as a cofactor. Post-translationally, autophosphorylated.

It localises to the cell membrane. It carries out the reaction L-threonyl-[receptor-protein] + ATP = O-phospho-L-threonyl-[receptor-protein] + ADP + H(+). The enzyme catalyses L-seryl-[receptor-protein] + ATP = O-phospho-L-seryl-[receptor-protein] + ADP + H(+). On ligand binding, forms a receptor complex consisting of two type II and two type I transmembrane serine/threonine kinases. Type II receptors phosphorylate and activate type I receptors which autophosphorylate, then bind and activate SMAD transcription. Positively regulates chondrocyte differentiation. The sequence is that of Bone morphogenetic protein receptor type-1B (BMPR1B) from Gallus gallus (Chicken).